The chain runs to 232 residues: Small ribosomal subunit protein uS2 (232 aa).

It belongs to the universal ribosomal protein uS2 family.

This Heliobacterium modesticaldum (strain ATCC 51547 / Ice1) protein is Small ribosomal subunit protein uS2.